A 363-amino-acid polypeptide reads, in one-letter code: 5-hydroxytryptamine receptor 1E (363 aa).

Over Met1–Glu21 the chain is Extracellular. Residues Asn2 and Asn5 are each glycosylated (N-linked (GlcNAc...) asparagine). The helical transmembrane segment at Lys22 to Met45 threads the bilayer. The Cytoplasmic portion of the chain corresponds to Ala46–Tyr59. A helical transmembrane segment spans residues Leu60–Val84. The Extracellular segment spans residues Met85–Tyr92. A helical transmembrane segment spans residues Phe93–Leu118. Cysteines 95 and 173 form a disulfide. Asp102 and Cys106 together coordinate serotonin. The DRY motif; important for ligand-induced conformation changes motif lies at Asp119–Tyr121. The Cytoplasmic segment spans residues Asp119–Arg138. A helical transmembrane segment spans residues Ala139–Pro157. The Extracellular segment spans residues Leu158–His179. A helical transmembrane segment spans residues Val180–Tyr203. Topologically, residues Arg204–Arg291 are cytoplasmic. Residues Ile292 to Leu316 form a helical membrane-spanning segment. At Ser317–Ser322 the chain is on the extracellular side. Residues Ser323–Thr345 traverse the membrane as a helical segment. The NPxxY motif; important for ligand-induced conformation changes and signaling motif lies at Asn340–Tyr344. Residues Ser346–Glu363 lie on the Cytoplasmic side of the membrane.

This sequence belongs to the G-protein coupled receptor 1 family.

It is found in the cell membrane. G-protein coupled receptor for 5-hydroxytryptamine (serotonin). Also functions as a receptor for various alkaloids and psychoactive substances. Ligand binding causes a conformation change that triggers signaling via guanine nucleotide-binding proteins (G proteins) and modulates the activity of downstream effectors, such as adenylate cyclase. HTR1E is coupled to G(i)/G(o) G alpha proteins and mediates inhibitory neurotransmission by inhibiting adenylate cyclase activity. This Pan troglodytes (Chimpanzee) protein is 5-hydroxytryptamine receptor 1E (HTR1E).